A 67-amino-acid polypeptide reads, in one-letter code: Alpha-conotoxin G1.5 (67 aa).

Positions 1–21 (MGMRMMFTVFLLVALATTVVS) are cleaved as a signal peptide. A propeptide spanning residues 22–47 (FTSDRASDRRNAAVKAFDLISSTVKK) is cleaved from the precursor. 2 disulfide bridges follow: C49-C55 and C50-C63. At Q65 the chain carries Glutamine amide.

The protein belongs to the conotoxin A superfamily. Expressed by the venom duct.

It is found in the secreted. In terms of biological role, alpha-conotoxins act on postsynaptic membranes, they bind to the nicotinic acetylcholine receptors (nAChR) and thus inhibit them. Globular isomer (C1-C3; C2-C4) selectively inhibits neuronal (non-muscle) nAChR subtypes particularly human alpha-3-beta-2/CHRNA3-CHRNB2 (IC(50)=35.7 nM) and alpha-9-alpha-10/CHRNA9-CHRNA10 nAChRs (IC(50)=569 nM), while the ribbon isomer (C1-C4; C2-C3) shows weak inhibition on alpha-3-beta-2/CHRNA3-CHRNB2, but not on all other receptors tested. The sequence is that of Alpha-conotoxin G1.5 from Conus geographus (Geography cone).